The primary structure comprises 631 residues: Phosphomethylpyrimidine synthase (631 aa).

Residues N239, M268, Y297, H333, 353 to 355, 394 to 397, and E433 contribute to the substrate site; these read SRG and DGLR. A Zn(2+)-binding site is contributed by H437. Substrate is bound at residue Y460. H501 provides a ligand contact to Zn(2+). [4Fe-4S] cluster is bound by residues C581, C584, and C589.

The protein belongs to the ThiC family. As to quaternary structure, homodimer. It depends on [4Fe-4S] cluster as a cofactor.

The enzyme catalyses 5-amino-1-(5-phospho-beta-D-ribosyl)imidazole + S-adenosyl-L-methionine = 4-amino-2-methyl-5-(phosphooxymethyl)pyrimidine + CO + 5'-deoxyadenosine + formate + L-methionine + 3 H(+). The protein operates within cofactor biosynthesis; thiamine diphosphate biosynthesis. In terms of biological role, catalyzes the synthesis of the hydroxymethylpyrimidine phosphate (HMP-P) moiety of thiamine from aminoimidazole ribotide (AIR) in a radical S-adenosyl-L-methionine (SAM)-dependent reaction. This chain is Phosphomethylpyrimidine synthase, found in Salmonella enteritidis PT4 (strain P125109).